A 1433-amino-acid polypeptide reads, in one-letter code: Probable ATP-dependent RNA helicase spindle-E (1433 aa).

The Helicase ATP-binding domain maps to 126–294 (INAINENPVV…FANERSAPPV (169 aa)). 139–146 (GETGCGKT) serves as a coordination point for ATP. The short motif at 240–243 (DEVH) is the DEAH box element. One can recognise a Helicase C-terminal domain in the interval 355–526 (TGKSYNQSLR…NCVLKAKELK (172 aa)). The Tudor domain maps to 935 to 998 (AGAITKGLML…RLMSQDLLRH (64 aa)).

The protein belongs to the DEAD box helicase family. DEAH subfamily.

Its subcellular location is the cytoplasm. It catalyses the reaction ATP + H2O = ADP + phosphate + H(+). Its function is as follows. Probable ATP-binding RNA helicase which plays a central role during spermatogenesis and oogenesis by repressing transposable elements and preventing their mobilization, which is essential for the germline integrity. Acts via the piRNA metabolic process, which mediates the repression of transposable elements during meiosis by forming complexes composed of piRNAs and Piwi and govern the methylation and subsequent repression of transposons. Involved in the repression of LTR retrotransposon copia. Also involved in telomere regulation by repressing specialized telomeric retroelements HeT-A, TAHRE, and TART; Drosophila telomeres being maintained by transposition of specialized telomeric retroelements. Involved in telomeric trans-silencing, a repression mechanism by which a transposon or a transgene inserted in subtelomeric heterochromatin has the capacity to repress in trans in the female germline, a homologous transposon, or transgene located in euchromatin. Involved in the repression of testis-expressed Stellate genes by the homologous Su(Ste) repeats. Required for anteroposterior and dorsoventral axis formation during oogenesis. This Drosophila pseudoobscura pseudoobscura (Fruit fly) protein is Probable ATP-dependent RNA helicase spindle-E (spn-E).